The primary structure comprises 502 residues: Cytochrome P450 83A1 (502 aa).

A helical transmembrane segment spans residues 1-21; the sequence is MEDIIIGVVALAAVLLFFLYQ. Residue Cys-442 coordinates heme.

The protein belongs to the cytochrome P450 family. Heme serves as cofactor.

The protein resides in the endoplasmic reticulum membrane. It carries out the reaction an (E)-omega-(methylsulfanyl)-alkanal oxime + glutathione + reduced [NADPH--hemoprotein reductase] + O2 = an S-[(1E)-1-(hydroxyimino)-omega-(methylsulfanyl)alkyl]-L-glutathione + oxidized [NADPH--hemoprotein reductase] + 2 H2O + H(+). Involved in the metabolism of aliphatic and aromatic oximes. Involved in the biosynthesis of both short-chain and long-chain aliphatic glucosinolates. The sequence is that of Cytochrome P450 83A1 (CYP83A1) from Arabidopsis thaliana (Mouse-ear cress).